A 414-amino-acid chain; its full sequence is Ciliary microtubule-associated protein 2 (414 aa).

The chain is Ciliary microtubule-associated protein 2 (Cimap2) from Mus musculus (Mouse).